Here is a 382-residue protein sequence, read N- to C-terminus: Histidinol-phosphate aminotransferase (382 aa).

K215 carries the N6-(pyridoxal phosphate)lysine modification. A disordered region spans residues N363–I382.

The protein belongs to the class-II pyridoxal-phosphate-dependent aminotransferase family. Histidinol-phosphate aminotransferase subfamily. In terms of assembly, homodimer. The cofactor is pyridoxal 5'-phosphate.

It carries out the reaction L-histidinol phosphate + 2-oxoglutarate = 3-(imidazol-4-yl)-2-oxopropyl phosphate + L-glutamate. Its pathway is amino-acid biosynthesis; L-histidine biosynthesis; L-histidine from 5-phospho-alpha-D-ribose 1-diphosphate: step 7/9. This Yersinia pestis bv. Antiqua (strain Antiqua) protein is Histidinol-phosphate aminotransferase.